The primary structure comprises 127 residues: Fluoride-specific ion channel FluC (127 aa).

Helical transmembrane passes span 4-24 (SILA…FLGL), 36-56 (GTLL…AYFA), 68-88 (LIIT…AEVV), and 99-119 (AAGA…LGLF). The Na(+) site is built by G75 and T78.

Belongs to the fluoride channel Fluc/FEX (TC 1.A.43) family.

The protein resides in the cell inner membrane. It catalyses the reaction fluoride(in) = fluoride(out). With respect to regulation, na(+) is not transported, but it plays an essential structural role and its presence is essential for fluoride channel function. In terms of biological role, fluoride-specific ion channel. Important for reducing fluoride concentration in the cell, thus reducing its toxicity. This Pseudomonas paraeruginosa (strain DSM 24068 / PA7) (Pseudomonas aeruginosa (strain PA7)) protein is Fluoride-specific ion channel FluC.